The chain runs to 260 residues: 4-hydroxy-tetrahydrodipicolinate reductase (260 aa).

12–17 (GFRGKM) provides a ligand contact to NAD(+). Position 40 (Lys-40) interacts with NADP(+). NAD(+) contacts are provided by residues 92-94 (GTT) and 118-121 (APNF). Catalysis depends on His-148, which acts as the Proton donor/acceptor. (S)-2,3,4,5-tetrahydrodipicolinate is bound at residue His-149. Lys-152 (proton donor) is an active-site residue. 158–159 (GT) contributes to the (S)-2,3,4,5-tetrahydrodipicolinate binding site.

It belongs to the DapB family.

The protein localises to the cytoplasm. The enzyme catalyses (S)-2,3,4,5-tetrahydrodipicolinate + NAD(+) + H2O = (2S,4S)-4-hydroxy-2,3,4,5-tetrahydrodipicolinate + NADH + H(+). It catalyses the reaction (S)-2,3,4,5-tetrahydrodipicolinate + NADP(+) + H2O = (2S,4S)-4-hydroxy-2,3,4,5-tetrahydrodipicolinate + NADPH + H(+). Its pathway is amino-acid biosynthesis; L-lysine biosynthesis via DAP pathway; (S)-tetrahydrodipicolinate from L-aspartate: step 4/4. Functionally, catalyzes the conversion of 4-hydroxy-tetrahydrodipicolinate (HTPA) to tetrahydrodipicolinate. The polypeptide is 4-hydroxy-tetrahydrodipicolinate reductase (Lactococcus lactis subsp. lactis (strain IL1403) (Streptococcus lactis)).